The chain runs to 309 residues: Epidermal retinol dehydrogenase 2 (309 aa).

The chain crosses the membrane as a helical span at residues 11 to 31; it reads LLVFLGKSLLSVLEALLFHVI. Residue 44–68 coordinates NADP(+); that stretch reads LITGAGSGLGRLLALQFARLGAVLV. Ser177 contacts substrate. Tyr190 (proton acceptor) is an active-site residue. The helical transmembrane segment at 270–290 threads the bilayer; sequence FLYFIVFLKSILPIKTGILIA.

The protein belongs to the short-chain dehydrogenases/reductases (SDR) family.

The protein localises to the endoplasmic reticulum membrane. The enzyme catalyses all-trans-retinol--[retinol-binding protein] + NAD(+) = all-trans-retinal--[retinol-binding protein] + NADH + H(+). It functions in the pathway cofactor metabolism; retinol metabolism. Oxidoreductase with strong preference for NAD. Active in both the oxidative and reductive directions. Oxidizes all-trans-retinol in all-trans-retinaldehyde. No activity was detected with 11-cis-retinol or 11-cis-retinaldehyde as substrates with either NAD(+)/NADH or NADP(+)/NADPH. In Mus musculus (Mouse), this protein is Epidermal retinol dehydrogenase 2.